Here is a 203-residue protein sequence, read N- to C-terminus: Large ribosomal subunit protein bL25 (203 aa).

The tract at residues glutamate 182–serine 203 is disordered.

This sequence belongs to the bacterial ribosomal protein bL25 family. CTC subfamily. Part of the 50S ribosomal subunit; part of the 5S rRNA/L5/L18/L25 subcomplex. Contacts the 5S rRNA. Binds to the 5S rRNA independently of L5 and L18.

In terms of biological role, this is one of the proteins that binds to the 5S RNA in the ribosome where it forms part of the central protuberance. In Caldicellulosiruptor saccharolyticus (strain ATCC 43494 / DSM 8903 / Tp8T 6331), this protein is Large ribosomal subunit protein bL25.